Consider the following 440-residue polypeptide: Trigger factor (440 aa).

The region spanning G163–P248 is the PPIase FKBP-type domain.

It belongs to the FKBP-type PPIase family. Tig subfamily.

It is found in the cytoplasm. It carries out the reaction [protein]-peptidylproline (omega=180) = [protein]-peptidylproline (omega=0). Its function is as follows. Involved in protein export. Acts as a chaperone by maintaining the newly synthesized protein in an open conformation. Functions as a peptidyl-prolyl cis-trans isomerase. This is Trigger factor from Solidesulfovibrio magneticus (strain ATCC 700980 / DSM 13731 / RS-1) (Desulfovibrio magneticus).